The chain runs to 301 residues: Light-independent protochlorophyllide reductase iron-sulfur ATP-binding protein (301 aa).

The span at 1–13 shows a compositional bias: low complexity; that stretch reads MNVTLRPPLTTAP. Residues 1 to 21 form a disordered region; sequence MNVTLRPPLTTAPRRPDGAGS. Residues 45–50 and K74 each bind ATP; that span reads GIGKST. S49 is a binding site for Mg(2+). [4Fe-4S] cluster is bound by residues C130 and C164. ATP is bound by residues 215–216 and 239–241; these read NR and PDL.

Belongs to the NifH/BchL/ChlL family. Homodimer. Protochlorophyllide reductase is composed of three subunits; BchL, BchN and BchB. [4Fe-4S] cluster serves as cofactor.

The enzyme catalyses chlorophyllide a + oxidized 2[4Fe-4S]-[ferredoxin] + 2 ADP + 2 phosphate = protochlorophyllide a + reduced 2[4Fe-4S]-[ferredoxin] + 2 ATP + 2 H2O. The protein operates within porphyrin-containing compound metabolism; bacteriochlorophyll biosynthesis (light-independent). Component of the dark-operative protochlorophyllide reductase (DPOR) that uses Mg-ATP and reduced ferredoxin to reduce ring D of protochlorophyllide (Pchlide) to form chlorophyllide a (Chlide). This reaction is light-independent. The L component serves as a unique electron donor to the NB-component of the complex, and binds Mg-ATP. The protein is Light-independent protochlorophyllide reductase iron-sulfur ATP-binding protein of Bradyrhizobium sp. (strain BTAi1 / ATCC BAA-1182).